The chain runs to 156 residues: ATP synthase subunit b (156 aa).

A helical membrane pass occupies residues 11 to 31 (AIAFVLFVLFCMKYIWPPIMA).

The protein belongs to the ATPase B chain family. As to quaternary structure, F-type ATPases have 2 components, F(1) - the catalytic core - and F(0) - the membrane proton channel. F(1) has five subunits: alpha(3), beta(3), gamma(1), delta(1), epsilon(1). F(0) has three main subunits: a(1), b(2) and c(10-14). The alpha and beta chains form an alternating ring which encloses part of the gamma chain. F(1) is attached to F(0) by a central stalk formed by the gamma and epsilon chains, while a peripheral stalk is formed by the delta and b chains.

Its subcellular location is the cell inner membrane. In terms of biological role, f(1)F(0) ATP synthase produces ATP from ADP in the presence of a proton or sodium gradient. F-type ATPases consist of two structural domains, F(1) containing the extramembraneous catalytic core and F(0) containing the membrane proton channel, linked together by a central stalk and a peripheral stalk. During catalysis, ATP synthesis in the catalytic domain of F(1) is coupled via a rotary mechanism of the central stalk subunits to proton translocation. Functionally, component of the F(0) channel, it forms part of the peripheral stalk, linking F(1) to F(0). In Yersinia enterocolitica serotype O:8 / biotype 1B (strain NCTC 13174 / 8081), this protein is ATP synthase subunit b.